The primary structure comprises 430 residues: Putative chloroquine resistance transporter (430 aa).

A disordered region spans residues M1–D22. Residues M1–S53 lie on the Cytoplasmic side of the membrane. Residues S7–S21 show a composition bias toward low complexity. A helical transmembrane segment spans residues K54 to F74. The Vacuolar segment spans residues K75–T88. Residues I89–L109 traverse the membrane as a helical segment. The Cytoplasmic portion of the chain corresponds to F110–R122. A helical membrane pass occupies residues P123–A143. At H144–G147 the chain is on the vacuolar side. A helical membrane pass occupies residues L148–I168. The Cytoplasmic segment spans residues L169–Y173. The helical transmembrane segment at H174 to L194 threads the bilayer. N195 carries an N-linked (GlcNAc...) asparagine glycan. Residues N195–N206 lie on the Vacuolar side of the membrane. The helical transmembrane segment at N207–L223 threads the bilayer. Residues R224–Q239 lie on the Cytoplasmic side of the membrane. A helical transmembrane segment spans residues F240–P260. At F261 to E306 the chain is on the vacuolar side. 2 disulfides stabilise this stretch: C281/C304 and C293/C301. The chain crosses the membrane as a helical span at residues A307 to M329. Residues L330 to T335 lie on the Cytoplasmic side of the membrane. Residues F336 to A358 form a helical membrane-spanning segment. Topologically, residues G359–S364 are vacuolar. A helical membrane pass occupies residues F365 to L385. The Cytoplasmic portion of the chain corresponds to G386–T430.

It belongs to the CRT-like transporter family.

The protein localises to the vacuole membrane. Its function is as follows. Nutrient transporter. Involved in maintaining the osmotic homeostasis of the digestive vacuole. The sequence is that of Putative chloroquine resistance transporter from Theileria annulata.